Reading from the N-terminus, the 425-residue chain is Raffinose permease (425 aa).

Over 1-11 the chain is Cytoplasmic; it reads MNSASTHKNTD. The helical transmembrane segment at 12-32 threads the bilayer; it reads FWIFGLFFFLYFFIMATCFPF. Over 33–48 the chain is Periplasmic; it reads LPVWLSDVVGLSKTDT. The helical transmembrane segment at 49–69 threads the bilayer; sequence GIVFSCLSLFAISFQPLLGVI. The Cytoplasmic segment spans residues 70-78; it reads SDRLGLKKN. The chain crosses the membrane as a helical span at residues 79 to 99; sequence LIWSISLLLVFFAPFFLYVFA. The Periplasmic segment spans residues 100 to 105; the sequence is PLLHLN. A helical transmembrane segment spans residues 106 to 126; it reads IWAGALTGGVFIGFVFSAGAG. At 127-147 the chain is on the cytoplasmic side; that stretch reads AIEAYIERVSRSSGFEYGKAR. A helical membrane pass occupies residues 148 to 168; the sequence is MFGCLGWALCATMAGILFNVD. Pro-169 is a topological domain (periplasmic). A helical transmembrane segment spans residues 170–190; that stretch reads SLVFWMGSGGALLLLLLLYLA. At 191–229 the chain is on the cytoplasmic side; it reads RPSTSQTAMVMNALGANSSLISTRMVFSLFRMRQMWMFV. Residues 230-250 traverse the membrane as a helical segment; the sequence is LYTIGVACVYDVFDQQFAIFF. Residues 251–265 are Periplasmic-facing; the sequence is RSFFDTPQAGIKAFG. A helical membrane pass occupies residues 266–286; that stretch reads FATTAGEICNAIIMFCTPWII. Topologically, residues 287–294 are cytoplasmic; it reads NRIGAKNT. The helical transmembrane segment at 295-315 threads the bilayer; it reads LLVAGGIMTIRITGSAFATTM. Residue Thr-316 is a topological domain, periplasmic. A helical membrane pass occupies residues 317 to 337; it reads EVVILKMLHALEVPFLLVGAF. The Cytoplasmic segment spans residues 338–351; that stretch reads KYITGVFDTRLSAT. Residues 352-372 form a helical membrane-spanning segment; the sequence is VYLIGFQFSKQLAAILLSTFA. The Periplasmic segment spans residues 373–383; it reads GHLYDRMGFQN. Residues 384-404 form a helical membrane-spanning segment; it reads TYFVLGMIVLTVTVISAFTLS. The Cytoplasmic portion of the chain corresponds to 405-425; sequence SSPGIVHPSVEKAPVAHSEIN.

This sequence belongs to the major facilitator superfamily. Oligosaccharide:H(+) symporter (OHS) (TC 2.A.1.5) family. As to quaternary structure, monomer.

It is found in the cell inner membrane. Functionally, responsible for transport of raffinose into the cell. Can also transport lactose and melibiose. Has weak activity with maltose. This is Raffinose permease from Escherichia coli.